The primary structure comprises 600 residues: Probable methyltransferase PMT21 (600 aa).

Residues 1–16 are Cytoplasmic-facing; that stretch reads MKYKDEKYEKAEKGSR. A helical; Signal-anchor for type II membrane protein transmembrane segment spans residues 17 to 37; it reads ILPKTVLLILLCGLSFYLGGL. Topologically, residues 38-600 are lumenal; sequence YCGKNIIEVS…YSSNASSETN (563 aa). Asparagine 594 is a glycosylation site (N-linked (GlcNAc...) asparagine).

The protein belongs to the methyltransferase superfamily.

The protein localises to the endoplasmic reticulum membrane. This is Probable methyltransferase PMT21 (ERD3) from Arabidopsis thaliana (Mouse-ear cress).